We begin with the raw amino-acid sequence, 119 residues long: Large ribosomal subunit protein uL22 (119 aa).

It belongs to the universal ribosomal protein uL22 family. As to quaternary structure, part of the 50S ribosomal subunit.

In terms of biological role, this protein binds specifically to 23S rRNA; its binding is stimulated by other ribosomal proteins, e.g. L4, L17, and L20. It is important during the early stages of 50S assembly. It makes multiple contacts with different domains of the 23S rRNA in the assembled 50S subunit and ribosome. The globular domain of the protein is located near the polypeptide exit tunnel on the outside of the subunit, while an extended beta-hairpin is found that lines the wall of the exit tunnel in the center of the 70S ribosome. The chain is Large ribosomal subunit protein uL22 from Rickettsia typhi (strain ATCC VR-144 / Wilmington).